The chain runs to 906 residues: Cadherin-2 (906 aa).

The N-terminal stretch at 1–25 is a signal peptide; sequence MCRIVGAPRTLLPLLAALLQASVEA. Positions 26-159 are excised as a propeptide; the sequence is SGGIALCKTG…HNGHLQRQKR (134 aa). S96 and S135 each carry phosphoserine. Cadherin domains lie at 160–267, 268–382, 383–497, 498–603, and 604–714; these read DWVI…RPEF, LHQV…PPEF, TAMS…NPYF, APNP…DNAP, and QVVP…DVDR. The Extracellular segment spans residues 160 to 724; that stretch reads DWVIPPINLP…IVGAGLGTGA (565 aa). E170 serves as a coordination point for Ca(2+). The N-linked (GlcNAc...) asparagine glycan is linked to N190. 7 residues coordinate Ca(2+): D226, E228, D259, M260, N261, D262, and N263. An N-linked (GlcNAc...) asparagine glycan is attached at N273. Positions 293, 295, and 301 each coordinate Ca(2+). N325 carries an N-linked (GlcNAc...) asparagine glycan. D353 is a binding site for Ca(2+). N402, N572, N622, N651, and N692 each carry an N-linked (GlcNAc...) asparagine glycan. Residues 725–745 form a helical membrane-spanning segment; sequence IIAILLCIIILLILVLMFVVW. Over 746 to 906 the chain is Cytoplasmic; that stretch reads MKRRDKERQA…LADMYGGGDD (161 aa). A compositionally biased stretch (low complexity) spans 863-880; sequence SGSTAGSLSSLNSSSSGG. The disordered stretch occupies residues 863–884; it reads SGSTAGSLSSLNSSSSGGEQDY.

Homodimer (via extracellular region). Can also form heterodimers with other cadherins (via extracellular region). Dimerization occurs in trans, i.e. with a cadherin chain from another cell. Interacts with CDCP1. Interacts with PCDH8; this complex may also include TAOK2. The interaction with PCDH8 may lead to internalization through TAOK2/p38 MAPK pathway. Identified in a complex containing FGFR4, NCAM1, CDH2, PLCG1, FRS2, SRC, SHC1, GAP43 and CTTN. May interact with OBSCN (via protein kinase domain 2). Interacts with FBXO45. In terms of processing, cleaved by MMP24. Ectodomain cleavage leads to the generation of a soluble 90 kDa N-terminal soluble fragment and a 45 kDa membrane-bound C-terminal fragment 1 (CTF1), which is further cleaved by gamma-secretase into a 35 kDa. Cleavage in neural stem cells by MMP24 affects CDH2-mediated anchorage of neural stem cells to ependymocytes in the adult subependymal zone, leading to modulate neural stem cell quiescence. Post-translationally, may be phosphorylated by OBSCN.

The protein resides in the cell membrane. It is found in the sarcolemma. It localises to the cell junction. The protein localises to the cell surface. Its subcellular location is the desmosome. The protein resides in the adherens junction. Functionally, calcium-dependent cell adhesion protein; preferentially mediates homotypic cell-cell adhesion by dimerization with a CDH2 chain from another cell. Cadherins may thus contribute to the sorting of heterogeneous cell types. Acts as a regulator of neural stem cells quiescence by mediating anchorage of neural stem cells to ependymocytes in the adult subependymal zone: upon cleavage by MMP24, CDH2-mediated anchorage is affected, leading to modulate neural stem cell quiescence. Plays a role in cell-to-cell junction formation between pancreatic beta cells and neural crest stem (NCS) cells, promoting the formation of processes by NCS cells. CDH2 may be involved in neuronal recognition mechanism. In hippocampal neurons, may regulate dendritic spine density. This Rhinolophus ferrumequinum (Greater horseshoe bat) protein is Cadherin-2 (CDH2).